We begin with the raw amino-acid sequence, 357 residues long: 3-isopropylmalate dehydrogenase (357 aa).

Substrate-binding residues include Arg97, Arg107, Arg135, and Asp224. Asp224, Asp248, and Asp252 together coordinate Mg(2+). 282-294 serves as a coordination point for NAD(+); sequence GSAPDIAGQDKAN.

Belongs to the isocitrate and isopropylmalate dehydrogenases family. LeuB type 1 subfamily. Homodimer. It depends on Mg(2+) as a cofactor. Requires Mn(2+) as cofactor.

It localises to the cytoplasm. It carries out the reaction (2R,3S)-3-isopropylmalate + NAD(+) = 4-methyl-2-oxopentanoate + CO2 + NADH. The protein operates within amino-acid biosynthesis; L-leucine biosynthesis; L-leucine from 3-methyl-2-oxobutanoate: step 3/4. In terms of biological role, catalyzes the oxidation of 3-carboxy-2-hydroxy-4-methylpentanoate (3-isopropylmalate) to 3-carboxy-4-methyl-2-oxopentanoate. The product decarboxylates to 4-methyl-2 oxopentanoate. The chain is 3-isopropylmalate dehydrogenase from Synechococcus sp. (strain CC9605).